The chain runs to 320 residues: Beta-sarcoglycan (320 aa).

Residues 1–10 (MAAAAAAAAA) are compositionally biased toward low complexity. Residues 1-34 (MAAAAAAAAATEQQSSNGPVKKSMREKAVERRNV) form a disordered region. Topologically, residues 1–67 (MAAAAAAAAA…GLRGRKGNLA (67 aa)) are cytoplasmic. Positions 23-34 (SMREKAVERRNV) are enriched in basic and acidic residues. A helical; Signal-anchor for type II membrane protein transmembrane segment spans residues 68 to 88 (ICVIVLLFILAVINLLITLVI). Residues 89–320 (WAVIRIGPNG…VADNPCGNTH (232 aa)) are Extracellular-facing. 3 N-linked (GlcNAc...) asparagine glycosylation sites follow: Asn160, Asn213, and Asn260. 2 disulfide bridges follow: Cys290–Cys316 and Cys292–Cys309.

The protein belongs to the sarcoglycan beta/delta/gamma/zeta family. As to quaternary structure, cross-link to form 2 major subcomplexes: one consisting of SGCB, SGCD and SGCG and the other consisting of SGCB and SGCD. The association between SGCB and SGCG is particularly strong while SGCA is loosely associated with the other sarcoglycans. Disulfide bonds are present.

The protein resides in the cell membrane. It localises to the sarcolemma. Its subcellular location is the cytoplasm. The protein localises to the cytoskeleton. Component of the sarcoglycan complex, a subcomplex of the dystrophin-glycoprotein complex which forms a link between the F-actin cytoskeleton and the extracellular matrix. This Mesocricetus auratus (Golden hamster) protein is Beta-sarcoglycan (SGCB).